The chain runs to 76 residues: RNA-binding protein KhpA (76 aa).

One can recognise a KH domain in the interval 30 to 76 (GEVLEVRVNPEDLGRVIGRSGRTAKALRTLVTALADGRRVRVDVVDD).

This sequence belongs to the KhpA RNA-binding protein family.

It is found in the cytoplasm. In terms of biological role, a probable RNA-binding protein. The sequence is that of RNA-binding protein KhpA from Leifsonia xyli subsp. xyli (strain CTCB07).